A 237-amino-acid chain; its full sequence is tRNA (guanine-N(1)-)-methyltransferase (237 aa).

Residues Gly112 and 132-137 contribute to the S-adenosyl-L-methionine site; that span reads IGDFVL.

The protein belongs to the RNA methyltransferase TrmD family. In terms of assembly, homodimer.

Its subcellular location is the cytoplasm. The catalysed reaction is guanosine(37) in tRNA + S-adenosyl-L-methionine = N(1)-methylguanosine(37) in tRNA + S-adenosyl-L-homocysteine + H(+). Functionally, specifically methylates guanosine-37 in various tRNAs. This Thermosynechococcus vestitus (strain NIES-2133 / IAM M-273 / BP-1) protein is tRNA (guanine-N(1)-)-methyltransferase.